The primary structure comprises 149 residues: Transcriptional repressor NrdR (149 aa).

The segment at cysteine 3 to cysteine 34 is a zinc-finger region. The ATP-cone domain occupies proline 49–glutamate 139.

Belongs to the NrdR family. Requires Zn(2+) as cofactor.

Functionally, negatively regulates transcription of bacterial ribonucleotide reductase nrd genes and operons by binding to NrdR-boxes. The polypeptide is Transcriptional repressor NrdR (Serratia proteamaculans (strain 568)).